A 153-amino-acid polypeptide reads, in one-letter code: ORM1-like protein 3 (153 aa).

The interval 1 to 17 (MNVGTAHSEVNPNTRVM) is important for ceramide level-sensing. At 1-21 (MNVGTAHSEVNPNTRVMNSRG) the chain is on the cytoplasmic side. 2 helical membrane-spanning segments follow: residues 22–42 (IWLS…SIPF) and 43–63 (VSVP…MYIF). Residues 64–94 (LHTVKGTPFETPDQGKARLLTHWEQMDYGVQ) lie on the Cytoplasmic side of the membrane. The chain crosses the membrane as a helical span at residues 95–117 (FTASRKFLTITPIVLYFLTSFYT). Residues 118–121 (KYDQ) lie on the Extracellular side of the membrane. A helical transmembrane segment spans residues 122–142 (VHFILNTVSLMSVLIPKLPQL). P137 carries the hydroxyproline modification. At 143 to 153 (HGVRIFGINKY) the chain is on the cytoplasmic side.

It belongs to the ORM family. Ceramide-sensitive subunit of the serine palmitoyltransferase (SPT) complex, which is also composed of SPTLC1, SPTLC2/3 and SPTSSA/B. Post-translationally, when hydroxylated at Pro-137, ubiquitinated via 'Lys-48'-linkage, leading to proteasomal degradation. In endothelial cells, ORMDL3 proteasomal degradation is controlled by the sphingosine 1-phosphate receptor signaling pathway.

It is found in the endoplasmic reticulum membrane. Functionally, plays an essential role in the homeostatic regulation of sphingolipid de novo biosynthesis by modulating the activity of the serine palmitoyltransferase (SPT) in response to ceramide levels. When complexed to SPT, the binding of ceramides to its N-terminus stabilizes a conformation that block SPT substrate entry, hence preventing SPT catalytic activity. Through this mechanism, maintains ceramide levels at sufficient concentrations for the production of complex sphingolipids, but which prevents the accumulation of ceramides to levels that trigger apoptosis. This Rattus norvegicus (Rat) protein is ORM1-like protein 3 (Ormdl3).